Here is a 1226-residue protein sequence, read N- to C-terminus: MYGQVERKRVNFGKITNLDYLPNLIQIQKRSFDWFLQADVKDETKRRHQGLEAVFRETFPIESPNNDMIMEYSHYILGEPKRSPQECKDTDATFAMPLKAVIRLIIKETGEIREQTVYMGDLPVMTEQGTFIINGAERVVVSQLHRSPGIFFSYDMERDVFSARVIPYRGSWLEFEMDNKGILIAKIDRKKKFPATLLVKSLGHGTNEEVLRLFYSSKKEKIAGATSKDLKKILGRRTINDIINMETGEVMLEAGSKINEDNISILKEMKVKEVELIEFPKGKDNPILINALEKDGVNDYEDAILKFHSLMRQGEPSTIENATTELTRLFFSPKTFDLGEVGRYKINSKFEFNNPKEFSGEKARVLRPADIIETVRYILNLFSETENYYPDDIDHLGNRRIRSVGELISNQLKTGFSRVERVIKERMTVQEIETQTPQLLISIKPITAVINEFFGSSQLSQFMDQTNPLAELTHKRRLNALGPGGLSRDRAGMEVRDVHYSHYGRMCPIETPEGPNIGLILSMSSYARVNDYGFLETPYRTVKNGKVTGQIEHLTADKEEYHYIAQASGVIDEKGELKNKLISTRHRGDFPFRNPSEIQYMDLAPLQVVSVSTALIPFLEHDDANRALMGSNMQRQAVPLLREEAPFVGTGMETRAAYDSRICIVNKHDGVVTSVDAENIVVERKGGKESDTYQLTKFKKTNQGTCFNQKPIVGVVHSEINGKVSKVSKEKIEVTGENGELKEYVLQIGSKQYSPIVSAGEEVKRGSTLAGQVVVGEKLDEMGNILVKGTVLADGPAVDNGVLALGRNVLAAFMPWEGYNFEDAILISERIVRDDVFSSIHIEEFEIQARETKLGPEQITRDIPNLSDKAFRDLDETGVIRIGAEVKPGDILVGMVTPKGETDLTPEYKLLHSIFGEKAKDVRDSSLRMPNGFEGTVIDIKRFSRENQDELPAGVEEMVKVFVARKRKLLVGDKMAGRHGNKGVVARVMAEEDMPYMEDGTPLDIVLNPLGVPSRMNLGQIFETQLGFAASKLGISFETPVFDGAEESDVDNFCKEANLPLNSKFKLYDGRTGLPFMNEVFCGYIYILKLAHLVEDKIHARSTGPYSLVTQQPLGGKAQFGGQRLGEMEVWALEAYGASHTLQELLTIKSDDMLGRARIYEAIVKGIHSIKPGIPESFNVLVQELRGLALDIIITDSEGNTVDISDYEDEYSKSKKKIKFETIENA.

This sequence belongs to the RNA polymerase beta chain family. In terms of assembly, the RNAP catalytic core consists of 2 alpha, 1 beta, 1 beta' and 1 omega subunit. When a sigma factor is associated with the core the holoenzyme is formed, which can initiate transcription.

It catalyses the reaction RNA(n) + a ribonucleoside 5'-triphosphate = RNA(n+1) + diphosphate. In terms of biological role, DNA-dependent RNA polymerase catalyzes the transcription of DNA into RNA using the four ribonucleoside triphosphates as substrates. The sequence is that of DNA-directed RNA polymerase subunit beta from Leptospira interrogans serogroup Icterohaemorrhagiae serovar Lai (strain 56601).